The following is a 392-amino-acid chain: Chalcone synthase-like protein 1 (392 aa).

Cys166 is a catalytic residue.

The protein belongs to the thiolase-like superfamily. Chalcone/stilbene synthases family. As to expression, expressed at the same level in leaves and in glandular trichomes.

The protein localises to the cytoplasm. Functionally, chalcone synthase that may use malonyl-CoA and hexanoyl-CoA as substrates but without producing olivetol or olivetolic acid. This chain is Chalcone synthase-like protein 1 (CAN383), found in Cannabis sativa (Hemp).